The chain runs to 274 residues: MDLGMTMAGFLRGLWCVVGTSVCAQTLQEAPAHFLLEGTDFAARVLRMSISARNVPSYWFEEGVWSEAPSASSRLPAKNKSTPGVPRRVTRALPRVKPDVFVFGNEHETVFWGQLNTIEHARYVVHRAVHPLDAHAHERYYEPLLKRFHFYCLEGRTPITSVSLCLFALDVSTRLIWAYALPSQVEMVWGTCIPRAWIPLEMHSHVRARYPKAKFYQFDPIGFVDSEGKVVLYPWALEQHAQRPQDFLVYEPQQGDWEQVASQTGPGHSPYRAM.

This is an uncharacterized protein from Treponema pallidum (strain Nichols).